We begin with the raw amino-acid sequence, 142 residues long: Hemoglobin subunit alpha-1 (142 aa).

N-acetylserine is present on S1. The Globin domain occupies 1–142 (SLSDKDKAAV…VALALAQRYR (142 aa)). Residue H59 coordinates O2. H88 contacts heme b.

It belongs to the globin family. Hb1 is a heterotetramer of two alpha-2 chains and two beta chains. In terms of tissue distribution, red blood cells.

In terms of biological role, involved in oxygen transport from gills to the various peripheral tissues. In Notothenia neglecta (Yellowbelly rockcod), this protein is Hemoglobin subunit alpha-1 (hba1).